We begin with the raw amino-acid sequence, 120 residues long: Ribosome-binding factor A (120 aa).

This sequence belongs to the RbfA family. In terms of assembly, monomer. Binds 30S ribosomal subunits, but not 50S ribosomal subunits or 70S ribosomes.

It localises to the cytoplasm. Its function is as follows. One of several proteins that assist in the late maturation steps of the functional core of the 30S ribosomal subunit. Associates with free 30S ribosomal subunits (but not with 30S subunits that are part of 70S ribosomes or polysomes). Required for efficient processing of 16S rRNA. May interact with the 5'-terminal helix region of 16S rRNA. This is Ribosome-binding factor A from Chlamydia pneumoniae (Chlamydophila pneumoniae).